A 245-amino-acid chain; its full sequence is tRNA1(Val) (adenine(37)-N6)-methyltransferase (245 aa).

This sequence belongs to the methyltransferase superfamily. tRNA (adenine-N(6)-)-methyltransferase family.

The protein resides in the cytoplasm. It catalyses the reaction adenosine(37) in tRNA1(Val) + S-adenosyl-L-methionine = N(6)-methyladenosine(37) in tRNA1(Val) + S-adenosyl-L-homocysteine + H(+). Its function is as follows. Specifically methylates the adenine in position 37 of tRNA(1)(Val) (anticodon cmo5UAC). This chain is tRNA1(Val) (adenine(37)-N6)-methyltransferase (yfiC), found in Escherichia coli (strain K12).